Here is a 317-residue protein sequence, read N- to C-terminus: DNA-directed RNA polymerase III subunit RPC6 (317 aa).

It belongs to the eukaryotic RPC34/RPC39 RNA polymerase subunit family. Component of the RNA polymerase III (Pol III) complex consisting of 17 subunits. Interacts with BRF1/TDS4.

It localises to the nucleus. Its function is as follows. DNA-dependent RNA polymerase catalyzes the transcription of DNA into RNA using the four ribonucleoside triphosphates as substrates. Specific peripheric component of RNA polymerase III which synthesizes small RNAs, such as 5S rRNA and tRNAs. Involved in recruitment of Pol III to the preinitiation complex. Involved in the configuration of an initiation-competent form of RNA polymerase. The sequence is that of DNA-directed RNA polymerase III subunit RPC6 (RPC34) from Saccharomyces cerevisiae (strain ATCC 204508 / S288c) (Baker's yeast).